Reading from the N-terminus, the 182-residue chain is T-cell surface glycoprotein CD3 gamma chain (182 aa).

A signal peptide spans Met1 to Ala22. The Extracellular portion of the chain corresponds to Gln23 to Ser116. The region spanning Gln37–Ser94 is the Ig-like domain. Residues Cys46 and Cys87 are joined by a disulfide bond. A glycan (N-linked (GlcNAc...) asparagine) is linked at Asn66. A helical transmembrane segment spans residues Gly117–Ala137. The Cytoplasmic portion of the chain corresponds to Gly138–Lys182. Ser145 carries the phosphoserine modification. At Ser148 the chain carries Phosphoserine; by PKC. Positions Asp149–Asn177 constitute an ITAM domain. Positions Leu153–Leu154 match the Di-leucine motif motif.

As to quaternary structure, the TCR-CD3 complex is composed of a CD3D/CD3E and a CD3G/CD3E heterodimers that preferentially associate with TCRalpha and TCRbeta, respectively, to form TCRalpha/CD3E/CD3G and TCRbeta/CD3G/CD3E trimers. In turn, the hexamer interacts with CD3Z homodimer to form the TCR-CD3 complex. Alternatively, TCRalpha and TCRbeta can be replaced by TCRgamma and TCRdelta. In terms of processing, phosphorylated on Tyr residues after T-cell receptor triggering by LCK in association with CD4/CD8. Phosphorylated also by PKC; leading to the TCR complex down-regulation. Post-translationally, phosphorylated on Tyr residues after T-cell receptor triggering by LCK in association with CD4/CD8.

The protein resides in the cell membrane. Its function is as follows. Part of the TCR-CD3 complex present on T-lymphocyte cell surface that plays an essential role in adaptive immune response. When antigen presenting cells (APCs) activate T-cell receptor (TCR), TCR-mediated signals are transmitted across the cell membrane by the CD3 chains CD3D, CD3E, CD3G and CD3Z. All CD3 chains contain immunoreceptor tyrosine-based activation motifs (ITAMs) in their cytoplasmic domain. Upon TCR engagement, these motifs become phosphorylated by Src family protein tyrosine kinases LCK and FYN, resulting in the activation of downstream signaling pathways. In addition to this role of signal transduction in T-cell activation, CD3G plays an essential role in the dynamic regulation of TCR expression at the cell surface. Indeed, constitutive TCR cycling is dependent on the di-leucine-based (diL) receptor-sorting motif present in CD3G. In Rattus norvegicus (Rat), this protein is T-cell surface glycoprotein CD3 gamma chain (Cd3g).